We begin with the raw amino-acid sequence, 34 residues long: Photosystem II reaction center protein M (34 aa).

A helical membrane pass occupies residues 5 to 25; it reads ILALIAIALFISVPTAFLIII.

Belongs to the PsbM family. PSII is composed of 1 copy each of membrane proteins PsbA, PsbB, PsbC, PsbD, PsbE, PsbF, PsbH, PsbI, PsbJ, PsbK, PsbL, PsbM, PsbT, PsbX, PsbY, PsbZ, Psb30/Ycf12, at least 3 peripheral proteins of the oxygen-evolving complex and a large number of cofactors. It forms dimeric complexes.

The protein localises to the plastid. The protein resides in the chloroplast thylakoid membrane. In terms of biological role, one of the components of the core complex of photosystem II (PSII). PSII is a light-driven water:plastoquinone oxidoreductase that uses light energy to abstract electrons from H(2)O, generating O(2) and a proton gradient subsequently used for ATP formation. It consists of a core antenna complex that captures photons, and an electron transfer chain that converts photonic excitation into a charge separation. This subunit is found at the monomer-monomer interface. The chain is Photosystem II reaction center protein M from Gnetum parvifolium (Small-leaved jointfir).